Here is a 665-residue protein sequence, read N- to C-terminus: ATPase WRNIP1 (665 aa).

The segment at 17-44 adopts a UBZ4-type zinc-finger fold; the sequence is QVQCPVCQQMMPAAHINSHLDRCLLLHP. Positions 20, 23, 31, 35, and 39 each coordinate Zn(2+). Residues 48-190 are disordered; that stretch reads AEPAAGSHRA…DGEDDPGHWD (143 aa). Residues Ser-65 and Ser-75 each carry the phosphoserine modification. Residues 76-89 show a composition bias toward polar residues; sequence ESSALKQPATPTAA. Lys-81 is covalently cross-linked (Glycyl lysine isopeptide (Lys-Gly) (interchain with G-Cter in ubiquitin)). The residue at position 85 (Thr-85) is a Phosphothreonine. Ser-91 and Ser-92 each carry phosphoserine. The span at 92 to 104 shows a compositional bias: acidic residues; the sequence is SEGEGEEGDDGGE. Thr-116 carries the phosphothreonine modification. Residues 130–155 show a composition bias toward low complexity; the sequence is RSSSPGRKGSGKRPAAAAAAGSASPR. Ser-139 is subject to Phosphoserine. Residue Lys-141 forms a Glycyl lysine isopeptide (Lys-Gly) (interchain with G-Cter in ubiquitin) linkage. Ser-153 carries the post-translational modification Phosphoserine. Positions 159–184 are enriched in acidic residues; it reads EAEAQEEEEAVGDGDGDGDADADGED. Lys-225 is covalently cross-linked (Glycyl lysine isopeptide (Lys-Gly) (interchain with G-Cter in ubiquitin)). 270–276 contributes to the ATP binding site; the sequence is PGCGKTT. Glycyl lysine isopeptide (Lys-Gly) (interchain with G-Cter in ubiquitin) cross-links involve residues Lys-301, Lys-310, Lys-316, Lys-322, and Lys-335. Residue Lys-482 forms a Glycyl lysine isopeptide (Lys-Gly) (interchain with G-Cter in SUMO2); alternate linkage. Lys-482 participates in a covalent cross-link: Glycyl lysine isopeptide (Lys-Gly) (interchain with G-Cter in ubiquitin); alternate. 2 positions are modified to phosphotyrosine: Tyr-534 and Tyr-562. A Glycyl lysine isopeptide (Lys-Gly) (interchain with G-Cter in ubiquitin) cross-link involves residue Lys-627. Lys-633 participates in a covalent cross-link: Glycyl lysine isopeptide (Lys-Gly) (interchain with G-Cter in ubiquitin); alternate. An N6-acetyllysine; alternate modification is found at Lys-633. Lys-636 participates in a covalent cross-link: Glycyl lysine isopeptide (Lys-Gly) (interchain with G-Cter in ubiquitin).

The protein belongs to the AAA ATPase family. RarA/MGS1/WRNIP1 subfamily. In terms of assembly, forms homooligomers, possibly octamers. Directly interacts with POLD1, POLD2 and POLD4. Interacts with the N-terminal domain of WRN. Interacts (via UBZ4-type zinc finger) with monoubiquitin and polyubiquitin. Interacts with TRIM14 and PPP6C; these interactions positively regulate the RIGI signaling pathway. Sumoylated with SUMO1 and SUMO2/3. As to expression, ubiquitously expressed.

The protein resides in the nucleus. It is found in the cytoplasm. The enzyme catalyses ATP + H2O = ADP + phosphate + H(+). In terms of biological role, functions as a modulator of initiation or reinitiation events during DNA polymerase delta-mediated DNA synthesis. In the presence of ATP, stimulation of DNA polymerase delta-mediated DNA synthesis is decreased. Also plays a role in the innate immune defense against viruses. Stabilizes the RIGI dsRNA interaction and promotes RIGI 'Lys-63'-linked polyubiquitination. In turn, RIGI transmits the signal through mitochondrial MAVS. The chain is ATPase WRNIP1 from Homo sapiens (Human).